Consider the following 173-residue polypeptide: Archaemetzincin (173 aa).

Histidine 130 provides a ligand contact to Zn(2+). Residue glutamate 131 is the Proton acceptor of the active site. Positions 134, 140, 141, 146, 165, and 168 each coordinate Zn(2+).

The protein belongs to the peptidase M54 family. In terms of assembly, monomer. Zn(2+) is required as a cofactor.

Functionally, probable zinc metalloprotease whose natural substrate is unknown. This chain is Archaemetzincin, found in Haloquadratum walsbyi (strain DSM 16790 / HBSQ001).